A 679-amino-acid chain; its full sequence is Oxidant-induced cell-cycle arrest protein 5 (679 aa).

Residues 50–441 enclose the Rab-GAP TBC domain; it reads GVPPQLRHVV…RVWDLLLGWR (392 aa). Residues 135-153 are compositionally biased toward low complexity; it reads NPAGSSSNANTTNIATPTP. Disordered stretches follow at residues 135–159, 250–271, and 524–544; these read NPAG…SSDA, TNNG…NNTN, and QSKA…NDKS. Positions 524-539 are enriched in polar residues; that stretch reads QSKAQKDNTVPSPGSD.

This sequence belongs to the OCA5 family.

The protein localises to the cytoplasm. In terms of biological role, required for replication of brome mosaic virus (BMV), a positive-strand RNA virus. The polypeptide is Oxidant-induced cell-cycle arrest protein 5 (OCA5) (Saccharomyces cerevisiae (strain RM11-1a) (Baker's yeast)).